We begin with the raw amino-acid sequence, 378 residues long: Filamin-binding LIM protein 1 (378 aa).

Positions 1-69 (MASKPEKRVA…RSWMPPGRAA (69 aa)) are filamin-binding. A disordered region spans residues 38–179 (WPGRPWESAP…PPPEEPVSFP (142 aa)). Residues 103–115 (LPPPPPPPAADLP) are compositionally biased toward pro residues. LIM zinc-binding domains lie at 186–247 (DICA…TLEK), 248–305 (CGKC…RKFA), and 306–375 (PVCS…RSAA). The interval 281-378 (IGDESFALDS…HVKRSAAGCC (98 aa)) is PLEKHC1-binding.

As to quaternary structure, interacts with PLEKHC1, FLNA, FLNB and FLNC. Interacts with NKX2-5.

It is found in the cell junction. Its subcellular location is the focal adhesion. The protein resides in the cytoplasm. The protein localises to the cytoskeleton. It localises to the stress fiber. Serves as an anchoring site for cell-ECM adhesion proteins and filamin-containing actin filaments. Is implicated in cell shape modulation (spreading) and motility. May participate in the regulation of filamin-mediated cross-linking and stabilization of actin filaments. May also regulate the assembly of filamin-containing signaling complexes that control actin assembly. Promotes dissociation of FLNA from ITGB3 and ITGB7. Promotes activation of integrins and regulates integrin-mediated cell-cell adhesion. The chain is Filamin-binding LIM protein 1 (FBLIM1) from Bos taurus (Bovine).